Consider the following 43-residue polypeptide: Pre-protein VI (43 aa).

Residues 1 to 33 constitute a propeptide that is removed on maturation; that stretch reads MEGINFSALAPRYGSRPMLSSWSDIGTSSMNGG.

Belongs to the adenoviridae protein VI family. In terms of assembly, interacts with hexon protein; this interaction allows nuclear import of hexon trimers and possibly pre-capsid assembly. Interacts (via C-terminal NLS) with importin alpha/beta. As to quaternary structure, interacts (via PPxY motif) with host NEDD4 ubiquitine ligase; this interaction might play a role in virus intracellular transport during entry. Part of a complex composed of the core-capsid bridging protein, the endosome lysis protein VI and the hexon-linking protein VIII; these interactions bridge the virus core to the capsid. Interacts with peripentonal hexons; this interaction stabilizes the capsid by gluing two peripentonal hexons together and joining them with an adjacent group-of-nine hexon. Protease cofactor: Heterodimer with the viral protease; disulfide-linked. Interacts with the viral protease. In terms of processing, ubiquitinated by Nedd4 following partial capsid disassembly; which might play a role in intracellular virus movement during entry. Protease cofactor: Contains the major nuclear import and export signals. Proteolytically removed during virion maturation. The processing of the C-terminus turns the precursor into a mature viral structural protein and abrogates its ability to promote hexon import and act as a potential chaperone protein.

The protein localises to the host nucleus. It localises to the host cytoplasm. Its subcellular location is the virion. During virus assembly, promotes hexon trimers nuclear import through nuclear pore complexes via an importin alpha/beta-dependent mechanism. By analogy to herpesviruses capsid assembly, might act as a chaperone to promote the formation of the icosahedral capsid. In terms of biological role, structural component of the virion that provides increased stability to the particle shell through its interaction with the core-capsid bridging protein and the hexon-linking protein VIII. Fibers shedding during virus entry into host cell allows the endosome lysis protein to be exposed as a membrane-lytic peptide. Exhibits pH-independent membrane fragmentation activity and probably mediates viral rapid escape from host endosome via organellar membrane lysis. It is not clear if it then remains partially associated with the capsid and involved in the intracellular microtubule-dependent transport of capsid to the nucleus, or if it is lost during endosomal penetration. The chain is Pre-protein VI from Bovine adenovirus 2 (BAdV-2).